Reading from the N-terminus, the 292-residue chain is Glycine--tRNA ligase alpha subunit (292 aa).

It belongs to the class-II aminoacyl-tRNA synthetase family. In terms of assembly, tetramer of two alpha and two beta subunits.

It is found in the cytoplasm. It catalyses the reaction tRNA(Gly) + glycine + ATP = glycyl-tRNA(Gly) + AMP + diphosphate. The protein is Glycine--tRNA ligase alpha subunit of Pelotomaculum thermopropionicum (strain DSM 13744 / JCM 10971 / SI).